A 609-amino-acid chain; its full sequence is MSDERRLPGSAVGWLVCGGLSLLANAWGILSVGAKQKKWKPLEFLLCTLAATHMLNVAVPIATYSVVQLRRQRPDFEWNEGLCKVFVSTFYTLTLATCFSVTSLSYHRMWMVCWPVNYRLSNAKKQAVHTVMGIWMVSFILSALPAVGWHDTSERFYTHGCRFIVAEIGLGFGVCFLLLVGGSVAMGVICTAIALFQTLAVQVGRQADRRAFTVPTIVVEDAQGKRRSSIDGSEPAKTSLQTTGLVTTIVFIYDCLMGFPVLVVSFSSLRADASAPWMALCVLWCSVAQALLLPVFLWACDRYRADLKAVREKCMALMANDEESDDETSLEGGISPDLVLERSLDYGYGGDFVALDRMAKYEISALEGGLPQLYPLRPLQEDKMQYLQVPPTRRFSHDDADVWAAVPLPAFLPRWGSGEDLAALAHLVLPAGPERRRASLLAFAEDAPPSRARRRSAESLLSLRPSALDSGPRGARDSPPGSPRRRPGPGPRSASASLLPDAFALTAFECEPQALRRPPGPFPAAPAAPDGADPGEAPTPPSSAQRSPGPRPSAHSHAGSLRPGLSASWGEPGGLRAAGGGGSTSSFLSSPSESSGYATLHSDSLGSAS.

Residues 1–11 (MSDERRLPGSA) lie on the Extracellular side of the membrane. A helical transmembrane segment spans residues 12–32 (VGWLVCGGLSLLANAWGILSV). Residues 33 to 41 (GAKQKKWKP) are Cytoplasmic-facing. Residues 42–62 (LEFLLCTLAATHMLNVAVPIA) traverse the membrane as a helical segment. Topologically, residues 63–84 (TYSVVQLRRQRPDFEWNEGLCK) are extracellular. The chain crosses the membrane as a helical span at residues 85–105 (VFVSTFYTLTLATCFSVTSLS). Topologically, residues 106-126 (YHRMWMVCWPVNYRLSNAKKQ) are cytoplasmic. Residues 127–147 (AVHTVMGIWMVSFILSALPAV) form a helical membrane-spanning segment. At 148–175 (GWHDTSERFYTHGCRFIVAEIGLGFGVC) the chain is on the extracellular side. A helical membrane pass occupies residues 176-196 (FLLLVGGSVAMGVICTAIALF). The Cytoplasmic segment spans residues 197-243 (QTLAVQVGRQADRRAFTVPTIVVEDAQGKRRSSIDGSEPAKTSLQTT). Residues 244–264 (GLVTTIVFIYDCLMGFPVLVV) form a helical membrane-spanning segment. At 265 to 276 (SFSSLRADASAP) the chain is on the extracellular side. A helical membrane pass occupies residues 277–297 (WMALCVLWCSVAQALLLPVFL). At 298–609 (WACDRYRADL…LHSDSLGSAS (312 aa)) the chain is on the cytoplasmic side. Disordered regions lie at residues 446–496 (DAPP…SASA) and 514–609 (ALRR…GSAS). Composition is skewed to low complexity over residues 458–479 (ESLLSLRPSALDSGPRGARDSP) and 527–536 (AAPDGADPGE). The span at 571-583 (EPGGLRAAGGGGS) shows a compositional bias: gly residues. Over residues 584–596 (TSSFLSSPSESSG) the composition is skewed to low complexity.

Belongs to the G-protein coupled receptor 1 family.

Its subcellular location is the cell membrane. In terms of biological role, orphan receptor. This Homo sapiens (Human) protein is Probable G-protein coupled receptor 153 (GPR153).